A 601-amino-acid chain; its full sequence is uncharacterized protein (601 aa).

Over residues 24–35 the composition is skewed to basic residues; it reads RKSNVVLKKNKG. 2 disordered regions span residues 24–106 and 171–219; these read RKSN…LKLD and YGND…PREE. Polar residues predominate over residues 54 to 81; the sequence is SQFSSRDNFRTTQTQASSSSEPSDNTNR. A compositionally biased stretch (basic and acidic residues) spans 92 to 106; the sequence is TPKKEESNAEKLKLD. Residues S236 and S238 each carry the phosphoserine modification. The disordered stretch occupies residues 260–283; that stretch reads RKRKVLSSSSEDDESSSPEDLLKP.

It localises to the nucleus. This is an uncharacterized protein from Schizosaccharomyces pombe (strain 972 / ATCC 24843) (Fission yeast).